Reading from the N-terminus, the 88-residue chain is Small ribosomal subunit protein bS20 (88 aa).

A disordered region spans residues 1 to 22; it reads MANTPSAKKAVNKIAKRTQVNK.

Belongs to the bacterial ribosomal protein bS20 family.

Functionally, binds directly to 16S ribosomal RNA. The sequence is that of Small ribosomal subunit protein bS20 from Bartonella bacilliformis (strain ATCC 35685 / KC583 / Herrer 020/F12,63).